The following is an 84-amino-acid chain: ICP35 (84 aa).

In Crustacea (WSSV), this protein is ICP35.